The following is a 425-amino-acid chain: Probable G-protein coupled receptor 63 (425 aa).

At 1–87 (MVVSGVLTAP…VFKSLNLAVQ (87 aa)) the chain is on the extracellular side. Asn-22, Asn-34, and Asn-68 each carry an N-linked (GlcNAc...) asparagine glycan. A helical transmembrane segment spans residues 88-112 (IILSAIMIFILFVSFLGNLVVCLMV). The Cytoplasmic segment spans residues 113 to 123 (YQKAAMRSAIN). The helical transmembrane segment at 124-148 (ILLASLAFADMLLAVLNMPFALVTI) threads the bilayer. Residues 149–165 (LTTRWIFGKFFCRLSAM) lie on the Extracellular side of the membrane. A helical membrane pass occupies residues 166–190 (FFWLFVIEGVAILLIISIDRFLIIV). The Cytoplasmic portion of the chain corresponds to 191-202 (QRQDKLNPYRAK). A helical membrane pass occupies residues 203 to 222 (VLIAVSWATAFSVAFPLAVG). The Extracellular segment spans residues 223–247 (NPDLQIPSRAPQCVFGYTTNSGYQA). Residues 248-272 (YVILISLISFFIPFLVILYSFMGIL) form a helical membrane-spanning segment. Over 273–321 (NTLRHNALRIHSYPEGICLSQASKLGLMSLQRPFQMSIDMGFKTRAFTT) the chain is Cytoplasmic. The chain crosses the membrane as a helical span at residues 322-345 (ILILFAVFIVCWAPFTTYSLVATF). At 346–357 (SKHFYYQHNFFE) the chain is on the extracellular side. Residues 358-379 (ISTWLLWLCYLKSALNPLIYYW) form a helical membrane-spanning segment. Residues 380-425 (RIKKFHDACLDMMPKSFKFLPRLPGHTRRRIRPSAVYVCGEHRTVL) are Cytoplasmic-facing.

It belongs to the G-protein coupled receptor 1 family. Brain specific.

The protein resides in the cell membrane. Functionally, orphan receptor. May play a role in brain function. The chain is Probable G-protein coupled receptor 63 (Gpr63) from Mus musculus (Mouse).